A 131-amino-acid chain; its full sequence is Ribosome-binding factor A (131 aa).

It belongs to the RbfA family. As to quaternary structure, monomer. Binds 30S ribosomal subunits, but not 50S ribosomal subunits or 70S ribosomes.

It is found in the cytoplasm. In terms of biological role, one of several proteins that assist in the late maturation steps of the functional core of the 30S ribosomal subunit. Associates with free 30S ribosomal subunits (but not with 30S subunits that are part of 70S ribosomes or polysomes). Required for efficient processing of 16S rRNA. May interact with the 5'-terminal helix region of 16S rRNA. This chain is Ribosome-binding factor A, found in Thermotoga maritima (strain ATCC 43589 / DSM 3109 / JCM 10099 / NBRC 100826 / MSB8).